We begin with the raw amino-acid sequence, 497 residues long: Nuclear pore complex protein npp-16 (497 aa).

Disordered regions lie at residues 76-95 (VPRR…APRK), 210-308 (TKKS…SAPK), and 359-379 (MENQ…GEYV). Composition is skewed to basic and acidic residues over residues 231 to 240 (KDGDKPKETP) and 250 to 260 (KPAEPSEEPKA). The interval 390 to 497 (EPDAVLSSKV…FTDKILEVAV (108 aa)) is ranBD1.

In terms of assembly, interacts with importin beta imb-1. Interacts with DNA-directed RNA polymerase III subunit rpc-1. Interacts with TATA-box-binding protein tbp-1. Interacts with GTF3C5 homolog tftc-5. Interacts with GTF3C3 homolog tftc-3.

The protein localises to the nucleus. The protein resides in the nuclear pore complex. It localises to the nucleus membrane. In terms of biological role, component of the nuclear pore complex. Plays a direct role in nuclear protein import. Required for anoxia-induced prophase arrest; may function in concert with cdk-1 to arrest prophase blastomeres in response to anoxia. This is Nuclear pore complex protein npp-16 from Caenorhabditis elegans.